The chain runs to 383 residues: 23S rRNA (uracil(747)-C(5))-methyltransferase RlmC (383 aa).

[4Fe-4S] cluster is bound by residues Cys-3, Cys-11, Cys-14, and Cys-89. Residues Gln-214, Phe-243, Glu-270, and Asn-315 each coordinate S-adenosyl-L-methionine. The Nucleophile role is filled by Cys-342.

Belongs to the class I-like SAM-binding methyltransferase superfamily. RNA M5U methyltransferase family. RlmC subfamily.

The enzyme catalyses uridine(747) in 23S rRNA + S-adenosyl-L-methionine = 5-methyluridine(747) in 23S rRNA + S-adenosyl-L-homocysteine + H(+). Catalyzes the formation of 5-methyl-uridine at position 747 (m5U747) in 23S rRNA. The chain is 23S rRNA (uracil(747)-C(5))-methyltransferase RlmC from Actinobacillus succinogenes (strain ATCC 55618 / DSM 22257 / CCUG 43843 / 130Z).